The sequence spans 305 residues: Large ribosomal subunit protein uL2m (305 aa).

A mitochondrion-targeting transit peptide spans 1-60 (MALCALTRALRSLNLAPPTVAAPAPSLFPAAQMMNNGLLQQPSALMLLPCRPVLTSVALN). Residues 264–283 (RWLGKRPNSGRWHRKGGWAG) form a disordered region. Positions 274-283 (RWHRKGGWAG) are enriched in basic residues.

Belongs to the universal ribosomal protein uL2 family. In terms of assembly, component of the mitochondrial large ribosomal subunit (mt-LSU). Mature mammalian 55S mitochondrial ribosomes consist of a small (28S) and a large (39S) subunit. The 28S small subunit contains a 12S ribosomal RNA (12S mt-rRNA) and 30 different proteins. The 39S large subunit contains a 16S rRNA (16S mt-rRNA), a copy of mitochondrial valine transfer RNA (mt-tRNA(Val)), which plays an integral structural role, and 52 different proteins.

It is found in the mitochondrion. This chain is Large ribosomal subunit protein uL2m (MRPL2), found in Homo sapiens (Human).